The chain runs to 99 residues: Nucleoid-associated protein LACR_0106 (99 aa).

This sequence belongs to the YbaB/EbfC family. In terms of assembly, homodimer.

Its subcellular location is the cytoplasm. It is found in the nucleoid. In terms of biological role, binds to DNA and alters its conformation. May be involved in regulation of gene expression, nucleoid organization and DNA protection. The polypeptide is Nucleoid-associated protein LACR_0106 (Lactococcus lactis subsp. cremoris (strain SK11)).